The primary structure comprises 61 residues: UPF0434 protein PSPTO_3844 (61 aa).

Belongs to the UPF0434 family.

The chain is UPF0434 protein PSPTO_3844 from Pseudomonas syringae pv. tomato (strain ATCC BAA-871 / DC3000).